We begin with the raw amino-acid sequence, 277 residues long: Bifunctional protein FolD 1 (277 aa).

NADP(+) is bound by residues 162–164 (GDS) and S187.

The protein belongs to the tetrahydrofolate dehydrogenase/cyclohydrolase family. Homodimer.

The catalysed reaction is (6R)-5,10-methylene-5,6,7,8-tetrahydrofolate + NADP(+) = (6R)-5,10-methenyltetrahydrofolate + NADPH. The enzyme catalyses (6R)-5,10-methenyltetrahydrofolate + H2O = (6R)-10-formyltetrahydrofolate + H(+). It functions in the pathway one-carbon metabolism; tetrahydrofolate interconversion. In terms of biological role, catalyzes the oxidation of 5,10-methylenetetrahydrofolate to 5,10-methenyltetrahydrofolate and then the hydrolysis of 5,10-methenyltetrahydrofolate to 10-formyltetrahydrofolate. This Syntrophomonas wolfei subsp. wolfei (strain DSM 2245B / Goettingen) protein is Bifunctional protein FolD 1.